The sequence spans 994 residues: Sarcoplasmic/endoplasmic reticulum calcium ATPase 1 (994 aa).

Residues 1–48 (MENAHAKTAEECLAFFGVNESVGLSGEQVRRALEKYGHNELPAEEGKT) are Cytoplasmic-facing. Residues 49–69 (IWELVVEQFEDLLVRILLLAA) traverse the membrane as a helical segment. The Lumenal segment spans residues 70–89 (CISFVLAWFEEGEETITAFV). Residues 90–110 (EPFVILLILIANAVVGVWQER) form a helical membrane-spanning segment. Topologically, residues 111–253 (NAENAIEALK…QDKTPLQQKL (143 aa)) are cytoplasmic. A helical membrane pass occupies residues 254–273 (DEFGEQLSKVISLICVAVWL). At 274-295 (INIGHFNDPVHGGSWIRGAIYY) the chain is on the lumenal side. Residues 296–313 (FKIAVALAVAAIPEGLPA) traverse the membrane as a helical segment. Val-304, Ala-305, Ile-307, and Glu-309 together coordinate Ca(2+). The Cytoplasmic portion of the chain corresponds to 314 to 757 (VITTCLALGT…EEGRAIYNNM (444 aa)). The active-site 4-aspartylphosphate intermediate is Asp-351. 2 residues coordinate Mg(2+): Asp-351 and Thr-353. Residues Thr-353, Glu-442, Arg-489, Lys-515, Arg-560, Thr-625, Gly-626, Asp-627, Arg-678, and Lys-684 each contribute to the ATP site. Asp-703 is a binding site for Mg(2+). Asn-706 contacts ATP. Residues 758–777 (KQFIRYLISSNVGEVVCIFL) traverse the membrane as a helical segment. Ca(2+) contacts are provided by Asn-768 and Glu-771. The Lumenal portion of the chain corresponds to 778–787 (TAALGLPEAL). The helical transmembrane segment at 788-808 (IPVQLLWVNLVTDGLPATALG) threads the bilayer. Positions 788 to 808 (IPVQLLWVNLVTDGLPATALG) are interaction with PLN. 3 residues coordinate Ca(2+): Asn-796, Thr-799, and Asp-800. The Cytoplasmic segment spans residues 809–828 (FNPPDLDIMDKPPRSPKEPL). Residues 829-851 (ISGWLFFRYLAIGGYVGAATVGA) form a helical membrane-spanning segment. Residues 852 to 897 (AAWWFLYAEDGPSLTYHQLTHFMQCTHHNAEFEGVDCDIFESPVPM) are Lumenal-facing. Cysteines 876 and 888 form a disulfide. Residues 898 to 917 (TMALSVLVTIEMCNALNSLS) traverse the membrane as a helical segment. Glu-908 is a binding site for Ca(2+). At 918–930 (ENQSLLRMPPWVN) the chain is on the cytoplasmic side. The helical transmembrane segment at 931 to 949 (IWLVGSICLSMSLHFVILY) threads the bilayer. The segment at 932–943 (WLVGSICLSMSL) is interaction with PLN. Residues 950-964 (VDPLPMIFKLTHLDL) are Lumenal-facing. A helical transmembrane segment spans residues 965–985 (AHWLVVLRISFPVILLDEALK). Residues 986–994 (FVARNYLEA) are Cytoplasmic-facing.

It belongs to the cation transport ATPase (P-type) (TC 3.A.3) family. Type IIA subfamily. Interacts with sarcolipin (SLN). Interacts with phospholamban (PLN). Interacts with myoregulin (MRLN). Interacts with DWORF. Mg(2+) serves as cofactor.

It is found in the endoplasmic reticulum membrane. The protein localises to the sarcoplasmic reticulum membrane. It carries out the reaction Ca(2+)(in) + ATP + H2O = Ca(2+)(out) + ADP + phosphate + H(+). Its activity is regulated as follows. Inhibited by sarcolipin (SLN) and myoregulin (MRLN). Also shown to be inhibited by phospholamban (PLN) in vitro. Enhanced by DWORF; DWORF increases activity by displacing sarcolipin (SLN), phospholamban (PLN) and myoregulin (MRLN). Key regulator of striated muscle performance by acting as the major Ca(2+) ATPase responsible for the reuptake of cytosolic Ca(2+) into the sarcoplasmic reticulum. Catalyzes the hydrolysis of ATP coupled with the translocation of calcium from the cytosol to the sarcoplasmic reticulum lumen. Contributes to calcium sequestration involved in muscular excitation/contraction. This is Sarcoplasmic/endoplasmic reticulum calcium ATPase 1 (ATP2A1) from Gallus gallus (Chicken).